A 365-amino-acid polypeptide reads, in one-letter code: Caffeic acid 3-O-methyltransferase (365 aa).

Substrate is bound at residue 130 to 136 (MNQDKVL). The substrate binding stretch occupies residues 162-180 (AFEYHGTDPRFNKVFNRGM). The S-adenosyl-L-methionine site is built by G208, D231, D251, M252, and K265. H269 acts as the Proton acceptor in catalysis.

The protein belongs to the class I-like SAM-binding methyltransferase superfamily. Cation-independent O-methyltransferase family. COMT subfamily. In terms of assembly, homodimer.

The enzyme catalyses (E)-caffeate + S-adenosyl-L-methionine = (E)-ferulate + S-adenosyl-L-homocysteine + H(+). The protein operates within aromatic compound metabolism; phenylpropanoid biosynthesis. In terms of biological role, catalyzes the conversion of caffeic acid to ferulic acid and of 5-hydroxyferulic acid to sinapic acid. The resulting products may subsequently be converted to the corresponding alcohols that are incorporated into lignins. The sequence is that of Caffeic acid 3-O-methyltransferase (COMT1) from Prunus dulcis (Almond).